The following is a 402-amino-acid chain: Caspase-1 (402 aa).

The CARD domain maps to 1–91 (MADKVLRAKR…YLAEILELQS (91 aa)). A propeptide spanning residues 1–118 (MADKVLRAKR…PFSSETKEKL (118 aa)) is cleaved from the precursor. Residues H236 and C284 contribute to the active site. Positions 297–314 (SVGNSEEGFLTDAIFEDD) are excised as a propeptide. Phosphoserine is present on S301.

This sequence belongs to the peptidase C14A family. In terms of assembly, heterotetramer that consists of two anti-parallel arranged heterodimers, each one formed by a 20 kDa (Caspase-1 subunit p20) and a 10 kDa (Caspase-1 subunit p10) subunit. May be a component of the inflammasome, a protein complex which also includes PYCARD, CARD8 and NLRP2 and whose function would be the activation of pro-inflammatory caspases. Component of the AIM2 PANoptosome complex, a multiprotein complex that drives inflammatory cell death (PANoptosis). Both the p10 and p20 subunits interact with MEFV. Interacts with CARD17P/INCA and CARD18. Interacts with SERPINB1; this interaction regulates CASP1 activity. As to quaternary structure, heterotetramer that consists of two anti-parallel arranged heterodimers, each one formed by a 20 kDa (Caspase-1 subunit p20) and a 10 kDa (Caspase-1 subunit p10) subunit. Post-translationally, the two subunits are derived from the precursor sequence by an autocatalytic mechanism. Ubiquitinated via 'Lys-11'-linked polyubiquitination. Deubiquitinated by USP8.

It is found in the cytoplasm. It localises to the cell membrane. It carries out the reaction Strict requirement for an Asp residue at position P1 and has a preferred cleavage sequence of Tyr-Val-Ala-Asp-|-.. In terms of biological role, thiol protease involved in a variety of inflammatory processes by proteolytically cleaving other proteins, such as the precursors of the inflammatory cytokines interleukin-1 beta (IL1B) and interleukin 18 (IL18) as well as the pyroptosis inducer Gasdermin-D (GSDMD), into active mature peptides. Plays a key role in cell immunity as an inflammatory response initiator: once activated through formation of an inflammasome complex, it initiates a pro-inflammatory response through the cleavage of the two inflammatory cytokines IL1B and IL18, releasing the mature cytokines which are involved in a variety of inflammatory processes. Cleaves a tetrapeptide after an Asp residue at position P1. Also initiates pyroptosis, a programmed lytic cell death pathway, through cleavage of GSDMD. In contrast to cleavage of interleukin IL1B, recognition and cleavage of GSDMD is not strictly dependent on the consensus cleavage site but depends on an exosite interface on CASP1 that recognizes and binds the Gasdermin-D, C-terminal (GSDMD-CT) part. Cleaves and activates CASP7 in response to bacterial infection, promoting plasma membrane repair. Upon inflammasome activation, during DNA virus infection but not RNA virus challenge, controls antiviral immunity through the cleavage of CGAS, rendering it inactive. In apoptotic cells, cleaves SPHK2 which is released from cells and remains enzymatically active extracellularly. The polypeptide is Caspase-1 (Casp1) (Rattus norvegicus (Rat)).